A 225-amino-acid polypeptide reads, in one-letter code: Translation initiation factor 6 (225 aa).

The protein belongs to the eIF-6 family.

Functionally, binds to the 50S ribosomal subunit and prevents its association with the 30S ribosomal subunit to form the 70S initiation complex. The protein is Translation initiation factor 6 of Hyperthermus butylicus (strain DSM 5456 / JCM 9403 / PLM1-5).